Reading from the N-terminus, the 882-residue chain is Homeobox-leucine zipper protein ROC3 (882 aa).

Residues 104 to 144 (DVDDDHKPQHSGHDQPPDAAQPSGAAGGNAKKKRYHRHTAH) are disordered. Residues 107–119 (DDHKPQHSGHDQP) are compositionally biased toward basic and acidic residues. Residues 133-143 (AKKKRYHRHTA) show a composition bias toward basic residues. The segment at residues 134–193 (KKKRYHRHTAHQIQQMEALFKECPHPDDKQRLKLSQELGLKPRQVKFWFQNRRTQMKAQQ) is a DNA-binding region (homeobox). The stretch at 200 to 263 (ILRAENENLK…LDRLACIATR (64 aa)) forms a coiled coil. In terms of domain architecture, START spans 340–584 (QEQDKQLVVD…LQRQCERLAS (245 aa)). A compositionally biased stretch (low complexity) spans 782–816 (AAAPTISSSTTTTTGNGNGETSSTPPRNSSSNNNN). A disordered region spans residues 782–820 (AAAPTISSSTTTTTGNGNGETSSTPPRNSSSNNNNADEL).

The protein belongs to the HD-ZIP homeobox family. Class IV subfamily.

It localises to the nucleus. Its function is as follows. Probable transcription factor. This Oryza sativa subsp. indica (Rice) protein is Homeobox-leucine zipper protein ROC3 (ROC3).